The chain runs to 316 residues: Cyclin-dependent kinase inhibitor 1C (316 aa).

Omega-N-methylarginine is present on arginine 107. The tract at residues glutamate 124–valine 153 is disordered. A compositionally biased stretch (pro residues) spans valine 139–valine 153. Tandem repeats lie at residues proline 156–alanine 159, proline 160–alanine 163, proline 180–alanine 183, proline 184–alanine 187, proline 188–alanine 191, proline 198–alanine 201, proline 202–alanine 205, proline 206–alanine 209, and proline 210–alanine 213. The tract at residues proline 156–alanine 213 is 9 X 4 AA repeats of P-A-P-A. A compositionally biased stretch (pro residues) spans alanine 181 to aspartate 217. Residues alanine 181–asparagine 260 are disordered. Residues serine 223–arginine 233 show a composition bias toward polar residues. Residues alanine 251–asparagine 260 show a composition bias toward low complexity. Phosphoserine is present on serine 268. Positions lysine 278–arginine 281 match the Nuclear localization signal motif. Positions lysine 278–arginine 316 are disordered.

The protein belongs to the CDI family. Interacts with PCNA. As to expression, expressed in the heart, brain, lung, skeletal muscle, kidney, pancreas and testis. Expressed in the eye. High levels are seen in the placenta while low levels are seen in the liver.

The protein localises to the nucleus. In terms of biological role, potent tight-binding inhibitor of several G1 cyclin/CDK complexes (cyclin E-CDK2, cyclin D2-CDK4, and cyclin A-CDK2) and, to lesser extent, of the mitotic cyclin B-CDC2. Negative regulator of cell proliferation. May play a role in maintenance of the non-proliferative state throughout life. The chain is Cyclin-dependent kinase inhibitor 1C (CDKN1C) from Homo sapiens (Human).